A 425-amino-acid chain; its full sequence is Serine--tRNA ligase (425 aa).

Residue threonine 233–glutamate 235 coordinates L-serine. Residue arginine 264–glutamate 266 participates in ATP binding. Position 287 (glutamate 287) interacts with L-serine. Glutamate 351–serine 354 provides a ligand contact to ATP. Serine 387 lines the L-serine pocket.

This sequence belongs to the class-II aminoacyl-tRNA synthetase family. Type-1 seryl-tRNA synthetase subfamily. Homodimer. The tRNA molecule binds across the dimer.

Its subcellular location is the cytoplasm. It carries out the reaction tRNA(Ser) + L-serine + ATP = L-seryl-tRNA(Ser) + AMP + diphosphate + H(+). It catalyses the reaction tRNA(Sec) + L-serine + ATP = L-seryl-tRNA(Sec) + AMP + diphosphate + H(+). Its pathway is aminoacyl-tRNA biosynthesis; selenocysteinyl-tRNA(Sec) biosynthesis; L-seryl-tRNA(Sec) from L-serine and tRNA(Sec): step 1/1. Catalyzes the attachment of serine to tRNA(Ser). Is also able to aminoacylate tRNA(Sec) with serine, to form the misacylated tRNA L-seryl-tRNA(Sec), which will be further converted into selenocysteinyl-tRNA(Sec). The protein is Serine--tRNA ligase of Clostridium perfringens (strain SM101 / Type A).